Consider the following 92-residue polypeptide: Transcription factor ILI6 (92 aa).

The disordered stretch occupies residues 1-20; sequence MSSRRSRSRQSGSSRITDEQ. The region spanning 5-59 is the bHLH domain; the sequence is RSRSRQSGSSRITDEQISDLVSKLQDLLPEARLRSNDRVPSSRVLQETCNYIRSL.

Belongs to the bHLH protein family. As to quaternary structure, interacts with APG.

It is found in the nucleus. In terms of biological role, atypical and probable non DNA-binding bHLH transcription factor that acts as a positive regulator of grain size. Binds the transcription repressor APG and forms a heterodimer of antagonistic bHLH transcription factors that regulates grain length and weight by controlling cell elongation in lemma and palea. May be involved in the control of lamina inclination through brassinosteroid signaling pathway. This chain is Transcription factor ILI6 (ILI6), found in Oryza sativa subsp. indica (Rice).